Reading from the N-terminus, the 504-residue chain is Protein Dok-7 (504 aa).

Residues 4–109 form the PH domain; the sequence is AALVEGQVKL…WDARIRYALG (106 aa). An IRS-type PTB domain is found at 105–210; sequence RYALGEVHRF…RGISPTKGPF (106 aa). Disordered regions lie at residues 210 to 229, 249 to 351, and 411 to 483; these read FGLRPVLPDPSPPGPSTVEE, SHAG…YSSS, and LCLA…PHAG. Low complexity-rich tracts occupy residues 263–279 and 288–310; these read LSSSSSEASHLDVSASS and SSSSASTSQEGPRPAAAQAAGEA. Over residues 331-341 the composition is skewed to polar residues; sequence GRQSSSDSGIA.

As to quaternary structure, homodimer. Forms a heterotetramer composed of 2 DOK7 and 2 MUSK molecules which facilitates MUSK trans-autophosphorylation on tyrosine residue and activation. Interacts (via IRS-type PTB domain) with MUSK (via cytoplasmic part); requires MUSK phosphorylation. Preferentially expressed in skeletal muscle and heart. Present in thigh muscle, diaphragm and heart but not in the liver or spleen (at protein level).

It localises to the cell membrane. The protein resides in the synapse. Probable muscle-intrinsic activator of MUSK that plays an essential role in neuromuscular synaptogenesis. Acts in aneural activation of MUSK and subsequent acetylcholine receptor (AchR) clustering in myotubes. Induces autophosphorylation of MUSK. This chain is Protein Dok-7 (DOK7), found in Homo sapiens (Human).